We begin with the raw amino-acid sequence, 514 residues long: 6-phosphofructo-2-kinase/fructose-2,6-bisphosphatase 3 (514 aa).

Residues Met-1–Gln-245 are 6-phosphofructo-2-kinase. Gly-42–Tyr-50 contacts ATP. Residues Arg-75 and Arg-99 each coordinate beta-D-fructose 6-phosphate. Asp-125 is an active-site residue. 2 residues coordinate beta-D-fructose 6-phosphate: Thr-127 and Arg-133. Residue Cys-155 is part of the active site. Residue Asn-164–Lys-169 participates in ATP binding. Lys-169, Arg-190, and Tyr-194 together coordinate beta-D-fructose 6-phosphate. The tract at residues Pro-246–Thr-514 is fructose-2,6-bisphosphatase. Arg-253 provides a ligand contact to beta-D-fructose 2,6-bisphosphate. Catalysis depends on His-254, which acts as the Tele-phosphohistidine intermediate. Asn-260 and Gly-266 together coordinate beta-D-fructose 2,6-bisphosphate. The Proton donor/acceptor role is filled by Glu-323. Beta-D-fructose 2,6-bisphosphate contacts are provided by Tyr-334, Arg-348, Lys-352, Tyr-363, Gln-389, and Arg-393. Residue Tyr-345–Arg-348 participates in ATP binding. Residues Gln-389–Arg-393 and Tyr-425 each bind ATP. The segment at Glu-444 to Arg-475 is disordered. Ser-461 carries the post-translational modification Phosphoserine; by AMPK and PKA. At Thr-463 the chain carries Phosphothreonine. Ser-467 is subject to Phosphoserine. Thr-471 carries the phosphothreonine; by PKC modification.

The protein in the C-terminal section; belongs to the phosphoglycerate mutase family. Homodimer. Forms a heterodimer with PFKFB2. Post-translationally, phosphorylation by AMPK stimulates activity.

It catalyses the reaction beta-D-fructose 2,6-bisphosphate + H2O = beta-D-fructose 6-phosphate + phosphate. It carries out the reaction beta-D-fructose 6-phosphate + ATP = beta-D-fructose 2,6-bisphosphate + ADP + H(+). Functionally, catalyzes both the synthesis and degradation of fructose 2,6-bisphosphate. The sequence is that of 6-phosphofructo-2-kinase/fructose-2,6-bisphosphatase 3 (PFKFB3) from Pongo abelii (Sumatran orangutan).